The sequence spans 430 residues: Putrescine 2-hydroxylase (430 aa).

Residues 88–203 (LYVGHQKLVP…LRDCHGLLFE (116 aa)) form the Rieske domain. 4 residues coordinate [2Fe-2S] cluster: Cys-128, His-130, Cys-162, and His-165.

Belongs to the bacterial ring-hydroxylating dioxygenase alpha subunit family. It depends on [2Fe-2S] cluster as a cofactor.

Rieske-type iron sulfur protein that can catalyze in vitro the 2-hydroxylation of putrescine, forming 2-hydroxyputrescine. May be involved in the biosynthesis of the cyclic hydroxamate siderophore alcaligin. This Bordetella bronchiseptica (strain ATCC BAA-588 / NCTC 13252 / RB50) (Alcaligenes bronchisepticus) protein is Putrescine 2-hydroxylase.